The following is a 162-amino-acid chain: Transcriptional repressor NrdR (162 aa).

A disordered region spans residues 1 to 21 (MNCPDCGNGRTRVIDTGASSD). A zinc finger lies at 3-34 (CPDCGNGRTRVIDTGASSDGASVRRRRECQRC). The 91-residue stretch at 49-139 (LQVKKRDGTI…VYKAFSEPQE (91 aa)) folds into the ATP-cone domain.

Belongs to the NrdR family. Zn(2+) is required as a cofactor.

Negatively regulates transcription of bacterial ribonucleotide reductase nrd genes and operons by binding to NrdR-boxes. The polypeptide is Transcriptional repressor NrdR (Natronomonas pharaonis (strain ATCC 35678 / DSM 2160 / CIP 103997 / JCM 8858 / NBRC 14720 / NCIMB 2260 / Gabara) (Halobacterium pharaonis)).